Consider the following 356-residue polypeptide: MAGLKLQAVTKSWDGKTQVIKPLTLDVADGEFIVMVGPSGCGKSTLLRMVAGLERVTEGDICINDQRVTEMEPKDRGIAMVFQNYALYPHMSVEENMAWGLKIRGMGKQQIAERVKEAARILELDGLLKRRPRELSGGQRQRVAMGRAIVRDPAVFLFDEPLSNLDAKLRVQMRLELQQLHRRLKTTSLYVTHDQVEAMTLAQRVMVMNGGVAEQIGTPVEVYEKPASLFVASFIGSPAMNLLTGRVNNEGTHFELDGGIALPLNGGYRQYAGRKMTLGIRPEHIALSSQAEGGVPLVMDTLEILGADNLAHGRWGEQKLVVRLAHQERPTAGSTLWLHLPENQLHLFDGETGQRV.

An ABC transporter domain is found at 4 to 235 (LKLQAVTKSW…PASLFVASFI (232 aa)). 37 to 44 (GPSGCGKS) is an ATP binding site.

This sequence belongs to the ABC transporter superfamily. sn-glycerol-3-phosphate importer (TC 3.A.1.1.3) family. The complex is composed of two ATP-binding proteins (UgpC), two transmembrane proteins (UgpA and UgpE) and a solute-binding protein (UgpB).

It localises to the cell inner membrane. It catalyses the reaction sn-glycerol 3-phosphate(out) + ATP + H2O = sn-glycerol 3-phosphate(in) + ADP + phosphate + H(+). In terms of biological role, part of the ABC transporter complex UgpBAEC involved in sn-glycerol-3-phosphate (G3P) import. Responsible for energy coupling to the transport system. The chain is sn-glycerol-3-phosphate import ATP-binding protein UgpC from Escherichia coli O157:H7.